The following is a 101-amino-acid chain: Large ribosomal subunit protein bL21 (101 aa).

This sequence belongs to the bacterial ribosomal protein bL21 family. In terms of assembly, part of the 50S ribosomal subunit. Contacts protein L20.

In terms of biological role, this protein binds to 23S rRNA in the presence of protein L20. This is Large ribosomal subunit protein bL21 from Sulfurovum sp. (strain NBC37-1).